The chain runs to 244 residues: Centromere protein H (244 aa).

M1 is subject to N-acetylmethionine. A disordered region spans residues 1–33 (METQSEEQAVTKPADSGGEGGPPQVAGAQAARP). The residue at position 16 (S16) is a Phosphoserine. Residues 22–31 (PPQVAGAQAA) show a composition bias toward low complexity. A Glycyl lysine isopeptide (Lys-Gly) (interchain with G-Cter in SUMO2) cross-link involves residue K64. T65 is modified (phosphothreonine). Coiled coils occupy residues 66–104 (PEQI…DRMQ) and 146–189 (DLEE…MENS).

Belongs to the CENP-H/MCM16 family. Self-associates. Component of the CENPA-NAC complex, at least composed of CENPA, CENPC, CENPH, CENPM, CENPN, CENPT and CENPU. The CENPA-NAC complex interacts with the CENPA-CAD complex, composed of CENPI, CENPK, CENPL, CENPO, CENPP, CENPQ, CENPR and CENPS. Interacts with KIF2C and NDC80.

Its subcellular location is the nucleus. The protein localises to the chromosome. The protein resides in the centromere. It is found in the kinetochore. Its function is as follows. Component of the CENPA-NAC (nucleosome-associated) complex, a complex that plays a central role in assembly of kinetochore proteins, mitotic progression and chromosome segregation. The CENPA-NAC complex recruits the CENPA-CAD (nucleosome distal) complex and may be involved in incorporation of newly synthesized CENPA into centromeres. The protein is Centromere protein H (CENPH) of Bos taurus (Bovine).